The following is a 525-amino-acid chain: Probable histidine ammonia-lyase (525 aa).

Residues 145–147 (ASG) constitute a cross-link (5-imidazolinone (Ala-Gly)). Ser-146 carries the 2,3-didehydroalanine (Ser) modification.

The protein belongs to the PAL/histidase family. In terms of processing, contains an active site 4-methylidene-imidazol-5-one (MIO), which is formed autocatalytically by cyclization and dehydration of residues Ala-Ser-Gly.

It is found in the cytoplasm. The catalysed reaction is L-histidine = trans-urocanate + NH4(+). The protein operates within amino-acid degradation; L-histidine degradation into L-glutamate; N-formimidoyl-L-glutamate from L-histidine: step 1/3. This is Probable histidine ammonia-lyase from Halobacterium salinarum (strain ATCC 29341 / DSM 671 / R1).